Reading from the N-terminus, the 555-residue chain is (+)-delta-cadinene synthase isozyme A (555 aa).

Residues 1–22 (MASQASQVLASPHPAISSENRP) are disordered. Mg(2+) contacts are provided by Asp-308, Asp-312, Asp-452, and Glu-456. The DDXXD motif signature appears at 308–312 (DDTYD).

This sequence belongs to the terpene synthase family. Mg(2+) serves as cofactor.

It carries out the reaction (2E,6E)-farnesyl diphosphate = (1S,8aR)-delta-cadinene + diphosphate. The protein operates within secondary metabolite biosynthesis; terpenoid biosynthesis. Its function is as follows. Responsible for the cyclization of trans,trans-farnesyl diphosphate (FPP) to (+)-delta cadinene. The polypeptide is (+)-delta-cadinene synthase isozyme A (CAD1-A) (Gossypium arboreum (Tree cotton)).